The primary structure comprises 159 residues: Ribosome maturation factor RimP (159 aa).

The protein belongs to the RimP family.

Its subcellular location is the cytoplasm. In terms of biological role, required for maturation of 30S ribosomal subunits. This chain is Ribosome maturation factor RimP, found in Halothermothrix orenii (strain H 168 / OCM 544 / DSM 9562).